A 148-amino-acid polypeptide reads, in one-letter code: Lysozyme C (148 aa).

The N-terminal stretch at 1 to 18 is a signal peptide; it reads MKAVIILGLVLLSVTVQG. The C-type lysozyme domain occupies 19-148; the sequence is KIFERCELAR…VSQYVQGCGV (130 aa). Disulfide bonds link Cys24–Cys146, Cys48–Cys134, Cys83–Cys99, and Cys95–Cys113. Residues Glu53 and Asp71 contribute to the active site.

Belongs to the glycosyl hydrolase 22 family. As to quaternary structure, monomer.

The catalysed reaction is Hydrolysis of (1-&gt;4)-beta-linkages between N-acetylmuramic acid and N-acetyl-D-glucosamine residues in a peptidoglycan and between N-acetyl-D-glucosamine residues in chitodextrins.. Its function is as follows. Lysozymes have primarily a bacteriolytic function; those in tissues and body fluids are associated with the monocyte-macrophage system and enhance the activity of immunoagents. This chain is Lysozyme C (LYZ), found in Allenopithecus nigroviridis (Allen's swamp monkey).